Here is a 365-residue protein sequence, read N- to C-terminus: UDP-N-acetylglucosamine--N-acetylmuramyl-(pentapeptide) pyrophosphoryl-undecaprenol N-acetylglucosamine transferase (365 aa).

UDP-N-acetyl-alpha-D-glucosamine contacts are provided by residues 19–21 (TGG), N131, R170, S201, I255, 274–279 (ALTVTE), and Q300.

Belongs to the glycosyltransferase 28 family. MurG subfamily.

Its subcellular location is the cell inner membrane. It catalyses the reaction di-trans,octa-cis-undecaprenyl diphospho-N-acetyl-alpha-D-muramoyl-L-alanyl-D-glutamyl-meso-2,6-diaminopimeloyl-D-alanyl-D-alanine + UDP-N-acetyl-alpha-D-glucosamine = di-trans,octa-cis-undecaprenyl diphospho-[N-acetyl-alpha-D-glucosaminyl-(1-&gt;4)]-N-acetyl-alpha-D-muramoyl-L-alanyl-D-glutamyl-meso-2,6-diaminopimeloyl-D-alanyl-D-alanine + UDP + H(+). The protein operates within cell wall biogenesis; peptidoglycan biosynthesis. Cell wall formation. Catalyzes the transfer of a GlcNAc subunit on undecaprenyl-pyrophosphoryl-MurNAc-pentapeptide (lipid intermediate I) to form undecaprenyl-pyrophosphoryl-MurNAc-(pentapeptide)GlcNAc (lipid intermediate II). In Acinetobacter baumannii (strain AB307-0294), this protein is UDP-N-acetylglucosamine--N-acetylmuramyl-(pentapeptide) pyrophosphoryl-undecaprenol N-acetylglucosamine transferase.